The primary structure comprises 401 residues: Imidazolonepropionase (401 aa).

Residues H66 and H68 each contribute to the Fe(3+) site. Positions 66 and 68 each coordinate Zn(2+). R75, Y138, and H171 together coordinate 4-imidazolone-5-propanoate. Y138 serves as a coordination point for N-formimidoyl-L-glutamate. Position 236 (H236) interacts with Fe(3+). H236 contributes to the Zn(2+) binding site. A 4-imidazolone-5-propanoate-binding site is contributed by Q239. A Fe(3+)-binding site is contributed by D311. D311 serves as a coordination point for Zn(2+). N-formimidoyl-L-glutamate contacts are provided by N313 and G315. T316 contributes to the 4-imidazolone-5-propanoate binding site.

Belongs to the metallo-dependent hydrolases superfamily. HutI family. It depends on Zn(2+) as a cofactor. Requires Fe(3+) as cofactor.

It is found in the cytoplasm. The catalysed reaction is 4-imidazolone-5-propanoate + H2O = N-formimidoyl-L-glutamate. Its pathway is amino-acid degradation; L-histidine degradation into L-glutamate; N-formimidoyl-L-glutamate from L-histidine: step 3/3. Functionally, catalyzes the hydrolytic cleavage of the carbon-nitrogen bond in imidazolone-5-propanoate to yield N-formimidoyl-L-glutamate. It is the third step in the universal histidine degradation pathway. The chain is Imidazolonepropionase from Acinetobacter baumannii (strain AB307-0294).